The primary structure comprises 197 residues: Peptidyl-tRNA hydrolase (197 aa).

Tyr23 contacts tRNA. The active-site Proton acceptor is the His28. Positions 73, 75, and 121 each coordinate tRNA.

Belongs to the PTH family. In terms of assembly, monomer.

The protein resides in the cytoplasm. The enzyme catalyses an N-acyl-L-alpha-aminoacyl-tRNA + H2O = an N-acyl-L-amino acid + a tRNA + H(+). Functionally, hydrolyzes ribosome-free peptidyl-tRNAs (with 1 or more amino acids incorporated), which drop off the ribosome during protein synthesis, or as a result of ribosome stalling. Catalyzes the release of premature peptidyl moieties from peptidyl-tRNA molecules trapped in stalled 50S ribosomal subunits, and thus maintains levels of free tRNAs and 50S ribosomes. This is Peptidyl-tRNA hydrolase from Frankia casuarinae (strain DSM 45818 / CECT 9043 / HFP020203 / CcI3).